A 26-amino-acid polypeptide reads, in one-letter code: Oxyopinin-3a (26 aa).

As to expression, expressed by the venom gland.

Its subcellular location is the secreted. Its function is as follows. May have cytolytic and antimicrobial activity. The protein is Oxyopinin-3a of Oxyopes takobius (Lynx spider).